Here is a 225-residue protein sequence, read N- to C-terminus: Uracil-DNA glycosylase (225 aa).

The Proton acceptor role is filled by Asp65.

Belongs to the uracil-DNA glycosylase (UDG) superfamily. UNG family.

It is found in the cytoplasm. The enzyme catalyses Hydrolyzes single-stranded DNA or mismatched double-stranded DNA and polynucleotides, releasing free uracil.. Excises uracil residues from the DNA which can arise as a result of misincorporation of dUMP residues by DNA polymerase or due to deamination of cytosine. This Bacillus cereus (strain AH820) protein is Uracil-DNA glycosylase.